The sequence spans 44 residues: 2S seed storage albumin protein (44 aa).

2 disulfides stabilise this stretch: cysteine 7-cysteine 42 and cysteine 19-cysteine 31.

Belongs to the 2S seed storage albumins family. In terms of assembly, the mature protein consists of a small and a large chain linked by 2 disulfide bonds.

Functionally, this is a 2S seed storage protein. Has antifungal activity. Inhibits spore germination in H.sativum (IC(50)=62.5 ug/ml) and P.betae (IC(50)=62.5 ug/ml). Inhibits growth of H.sativum, V.albo-atrum and P.infestans. The protein is 2S seed storage albumin protein of Taraxacum officinale (Common dandelion).